The chain runs to 216 residues: Ras-related protein Rab-11A (216 aa).

An N-acetylglycine modification is found at Gly2. GTP contacts are provided by Ser20, Gly21, Val22, Gly23, Lys24, Ser25, Asn26, Asn37, Leu38, Ser40, Ser42, and Thr43. Ser25 provides a ligand contact to Mg(2+). Residues 36 to 47 (FNLESKSTIGVE) carry the Switch 1 motif. The Mg(2+) site is built by Thr43 and Asp66. The Switch 2 signature appears at 67–86 (TAGQERYRAITSAYYRGAVG). Positions 69, 124, 125, 127, 155, and 156 each coordinate GTP. Residues 183–207 (DRRENDMSPSNNVVPIHVPPTTENK) form a disordered region. S-geranylgeranyl cysteine attachment occurs at residues Cys212 and Cys213. Cysteine methyl ester is present on Cys213. Residues 214–216 (QNI) constitute a propeptide, removed in mature form.

This sequence belongs to the small GTPase superfamily. Rab family. As to quaternary structure, interacts (GTP-bound form) with RAB11FIPs (via their C-termini) including RAB11FIP1, RAB11FIP2, RAB11FIP3, RAB11FIP4 and RAB11FIP5 effectors. Forms a complex with RAB11FIP3 and dynein intermediate chain DYNC1LI1; the interaction between RAB11A1 and RAB11FIP3 is direct; the complex regulates endocytic trafficking. Interacts with EVI5; EVI5 and RAB11FIP3 may be mutually exclusive and compete for binding RAB11A. Interacts with SGSM1, SGSM2, SGSM3 and VIPAS39. Interacts with EXOC6 in a GTP-dependent manner. Interacts with RAB11FIP5. Interacts with STXBP6. Interacts (GDP-bound form) with ZFYVE27. Interacts with BIRC6/bruce. May interact with TBC1D14. Interacts with UNC119; in a cell cycle-dependent manner. GDP-bound and nucleotide-free forms interact with SH3BP5. Interacts (GDP-bound form) with KIF5A in a ZFYVE27-dependent manner. Interacts (GDP-bound form) with RELCH. Found in a complex composed of RELCH, OSBP1 and RAB11A. Interacts with TBC1D12. Interacts with DEF6. Interacts with ATP9A. Forms a heterotetramer with RAB11FIP3; the GTP-bound form is preferred for binding. Forms a complex with Rabin8/RAB3IP and RAB11FIP3, probably a heterohexamer with two of each protein subunit, where Rabin8/RAB3IP and RAB11FIP3 simultaneously bind to RAB11A; the complex promotes preciliary trafficking and cilia growth. Forms a complex containing RAB11A, ASAP1, Rabin8/RAB3IP, RAP11FIP3 and ARF4; the complex promotes preciliary trafficking; the complex binds to RHO in photoreceptor cells and promotes RHO ciliary transport. Interacts (GTP-bound form) with WDR44; the interaction prevents RAB11A-RAB3IP-RAB11FIP3 complex formation. Mg(2+) is required as a cofactor.

It is found in the cell membrane. The protein localises to the endosome membrane. The protein resides in the recycling endosome membrane. Its subcellular location is the cleavage furrow. It localises to the cytoplasmic vesicle. It is found in the phagosome. The protein localises to the cytoplasmic vesicle membrane. The protein resides in the golgi apparatus. Its subcellular location is the trans-Golgi network. It carries out the reaction GTP + H2O = GDP + phosphate + H(+). Regulated by guanine nucleotide exchange factors (GEFs) which promote the exchange of bound GDP for free GTP. Regulated by GTPase activating proteins (GAPs) which increase the GTP hydrolysis activity. Inhibited by GDP dissociation inhibitors (GDIs) which prevent Rab-GDP dissociation. In terms of biological role, the small GTPases Rab are key regulators of intracellular membrane trafficking, from the formation of transport vesicles to their fusion with membranes. Rabs cycle between an inactive GDP-bound form and an active GTP-bound form that is able to recruit to membranes different set of downstream effectors directly responsible for vesicle formation, movement, tethering and fusion. The small Rab GTPase RAB11A regulates endocytic recycling. Forms a functional Rab11/RAB11FIP3/dynein complex that regulates the movement of peripheral sorting endosomes (SE) along microtubule tracks toward the microtubule organizing center/centrosome, generating the endosomal recycling compartment (ERC). Acts as a major regulator of membrane delivery during cytokinesis. Together with MYO5B and RAB8A participates in epithelial cell polarization. Together with Rabin8/RAB3IP, RAB8A, the exocyst complex, PARD3, PRKCI, ANXA2, CDC42 and DNMBP promotes transcytosis of PODXL to the apical membrane initiation sites (AMIS), apical surface formation and lumenogenesis. Together with MYO5B participates in CFTR trafficking to the plasma membrane and TF (Transferrin) recycling in nonpolarized cells. Required in a complex with MYO5B and RAB11FIP2 for the transport of NPC1L1 to the plasma membrane. Participates in the sorting and basolateral transport of CDH1 from the Golgi apparatus to the plasma membrane. Regulates the recycling of FCGRT (receptor of Fc region of monomeric IgG) to basolateral membranes. May also play a role in melanosome transport and release from melanocytes. Promotes Rabin8/RAB3IP preciliary vesicular trafficking to mother centriole by forming a ciliary targeting complex containing Rab11, ASAP1, Rabin8/RAB3IP, RAB11FIP3 and ARF4, thereby regulating ciliogenesis initiation. On the contrary, upon LPAR1 receptor signaling pathway activation, interaction with phosphorylated WDR44 prevents Rab11-RAB3IP-RAB11FIP3 complex formation and cilia growth. Participates in the export of a subset of neosynthesized proteins through a Rab8-Rab10-Rab11-endososomal dependent export route via interaction with WDR44. This Bos taurus (Bovine) protein is Ras-related protein Rab-11A.